The following is a 252-amino-acid chain: Neurexophilin-3 (252 aa).

An N-terminal signal peptide occupies residues 1 to 22; that stretch reads MQLTRCCFVFLVQGSLYLVICG. The tract at residues 23 to 75 is II; sequence QDDGPPGSEDPEHDDHEGQPRPRVPRKRGHISPKSRPLANSTLLGLLAPPGEV. The disordered stretch occupies residues 27 to 59; sequence PPGSEDPEHDDHEGQPRPRVPRKRGHISPKSRP. Basic residues predominate over residues 45 to 55; that stretch reads RVPRKRGHISP. 4 N-linked (GlcNAc...) asparagine glycosylation sites follow: Asn62, Asn127, Asn137, and Asn143. Residues 76-157 form an III region; it reads WGVLGQPPNR…LVPPSKAVEF (82 aa). The segment at 158 to 166 is IV (linker domain); the sequence is HQEQQIFIE. Residues 167-252 form a v (Cys-rich) region; that stretch reads AKASKIFNCR…HSDTPYYPSG (86 aa).

The protein belongs to the neurexophilin family. Post-translationally, may be proteolytically processed at the boundary between the N-terminal non-conserved and the central conserved domain in neuron-like cells. In terms of tissue distribution, highest level in brain, present also in lung, kidney and testis.

Its subcellular location is the secreted. May be signaling molecules that resemble neuropeptides. Ligand for alpha-neurexins. In Mus musculus (Mouse), this protein is Neurexophilin-3 (Nxph3).